Reading from the N-terminus, the 245-residue chain is 2,3-bisphosphoglycerate-dependent phosphoglycerate mutase (245 aa).

Substrate-binding positions include R8 to N15, T21 to G22, R60, E87 to Y90, K98, R114 to R115, and G183 to N184. H9 serves as the catalytic Tele-phosphohistidine intermediate. The active-site Proton donor/acceptor is E87.

The protein belongs to the phosphoglycerate mutase family. BPG-dependent PGAM subfamily.

The catalysed reaction is (2R)-2-phosphoglycerate = (2R)-3-phosphoglycerate. It participates in carbohydrate degradation; glycolysis; pyruvate from D-glyceraldehyde 3-phosphate: step 3/5. Functionally, catalyzes the interconversion of 2-phosphoglycerate and 3-phosphoglycerate. The polypeptide is 2,3-bisphosphoglycerate-dependent phosphoglycerate mutase (Bacillus cereus (strain G9842)).